The chain runs to 141 residues: Flagellar assembly factor FliW (141 aa).

Belongs to the FliW family. In terms of assembly, interacts with translational regulator CsrA and flagellin(s).

The protein resides in the cytoplasm. Its function is as follows. Acts as an anti-CsrA protein, binds CsrA and prevents it from repressing translation of its target genes, one of which is flagellin. Binds to flagellin and participates in the assembly of the flagellum. The sequence is that of Flagellar assembly factor FliW from Clostridium acetobutylicum (strain ATCC 824 / DSM 792 / JCM 1419 / IAM 19013 / LMG 5710 / NBRC 13948 / NRRL B-527 / VKM B-1787 / 2291 / W).